Here is a 385-residue protein sequence, read N- to C-terminus: Protein pelota homolog (385 aa).

It belongs to the eukaryotic release factor 1 family. Pelota subfamily. Component of the Pelota-HBS1L complex, also named Dom34-Hbs1 complex, composed of PELO and HBS1L. Requires a divalent metal cation as cofactor.

The protein resides in the cytoplasm. Functionally, component of the Pelota-HBS1L complex, a complex that recognizes stalled ribosomes and triggers the No-Go Decay (NGD) pathway. In the Pelota-HBS1L complex, PELO recognizes ribosomes stalled at the 3' end of an mRNA and engages stalled ribosomes by destabilizing mRNA in the mRNA channel. Following mRNA extraction from stalled ribosomes by the SKI complex, the Pelota-HBS1L complex promotes recruitment of ABCE1, which drives the disassembly of stalled ribosomes, followed by degradation of damaged mRNAs as part of the NGD pathway. This Gallus gallus (Chicken) protein is Protein pelota homolog (PELO).